The chain runs to 285 residues: Bifunctional protein FolD (285 aa).

NADP(+) contacts are provided by residues 166-168 (GAS) and Ile232.

The protein belongs to the tetrahydrofolate dehydrogenase/cyclohydrolase family. In terms of assembly, homodimer.

It catalyses the reaction (6R)-5,10-methylene-5,6,7,8-tetrahydrofolate + NADP(+) = (6R)-5,10-methenyltetrahydrofolate + NADPH. The enzyme catalyses (6R)-5,10-methenyltetrahydrofolate + H2O = (6R)-10-formyltetrahydrofolate + H(+). The protein operates within one-carbon metabolism; tetrahydrofolate interconversion. Catalyzes the oxidation of 5,10-methylenetetrahydrofolate to 5,10-methenyltetrahydrofolate and then the hydrolysis of 5,10-methenyltetrahydrofolate to 10-formyltetrahydrofolate. The chain is Bifunctional protein FolD from Aliivibrio fischeri (strain MJ11) (Vibrio fischeri).